The chain runs to 1042 residues: Atrial natriuretic peptide-converting enzyme (1042 aa).

Residues 1-25 (MKQSPALAPEERCRRAGSPKPVLRA) are disordered. Over 1–45 (MKQSPALAPEERCRRAGSPKPVLRADDNNMGNGCSQKLATANLLR) the chain is Cytoplasmic. Positions 26–29 (DDNN) match the DDNN motif motif. The chain crosses the membrane as a helical; Signal-anchor for type II membrane protein span at residues 46 to 66 (FLLLVLIPCICALVLLLVILL). Topologically, residues 67-1042 (SYVGTLQKVY…QIYIQTFLLN (976 aa)) are extracellular. 4 N-linked (GlcNAc...) asparagine glycosylation sites follow: asparagine 80, asparagine 104, asparagine 135, and asparagine 141. An FZ 1 domain is found at 134 to 259 (RNTSACMNIT…SNVSRICFSP (126 aa)). 8 disulfides stabilise this stretch: cysteine 139–cysteine 199, cysteine 147–cysteine 192, cysteine 183–cysteine 223, cysteine 212–cysteine 256, cysteine 216–cysteine 240, cysteine 269–cysteine 282, cysteine 277–cysteine 295, and cysteine 289–cysteine 304. Asparagine 231, asparagine 245, and asparagine 251 each carry an N-linked (GlcNAc...) asparagine glycan. LDL-receptor class A domains are found at residues 268–304 (LCGR…EAHC), 305–340 (NCSE…EQNC), 341–377 (DCNP…EVNC), and 378–415 (SCHS…ENCS). Asparagine 305 carries an N-linked (GlcNAc...) asparagine glycan. Intrachain disulfides connect cysteine 306/cysteine 318, cysteine 313/cysteine 331, cysteine 325/cysteine 340, cysteine 342/cysteine 355, cysteine 350/cysteine 368, cysteine 362/cysteine 377, cysteine 379/cysteine 392, cysteine 387/cysteine 405, and cysteine 399/cysteine 414. Asparagine 320 carries an N-linked (GlcNAc...) asparagine glycan. Residue asparagine 376 is glycosylated (N-linked (GlcNAc...) asparagine). N-linked (GlcNAc...) asparagine glycosylation is found at asparagine 413, asparagine 446, asparagine 451, and asparagine 469. The FZ 2 domain occupies 450–573 (NNCSQCEPIT…NSDNQTCLMP (124 aa)). Cystine bridges form between cysteine 455–cysteine 518, cysteine 463–cysteine 511, cysteine 502–cysteine 540, cysteine 529–cysteine 570, cysteine 533–cysteine 557, cysteine 580–cysteine 592, cysteine 587–cysteine 605, cysteine 599–cysteine 614, cysteine 616–cysteine 630, cysteine 624–cysteine 643, cysteine 637–cysteine 652, cysteine 655–cysteine 667, cysteine 662–cysteine 680, and cysteine 674–cysteine 689. Asparagine 567 carries an N-linked (GlcNAc...) asparagine glycan. LDL-receptor class A domains lie at 579 to 614 (ECSP…EENC), 615 to 653 (GCKE…KNCS), and 654 to 689 (FCQD…EWDC). A glycan (N-linked (GlcNAc...) asparagine) is linked at asparagine 651. In terms of domain architecture, SRCR spans 690-801 (VTLSINVNSS…RRPAARMNKR (112 aa)). Asparagine 697 and asparagine 761 each carry an N-linked (GlcNAc...) asparagine glycan. 5 cysteine pairs are disulfide-bonded: cysteine 790/cysteine 912, cysteine 828/cysteine 844, cysteine 926/cysteine 991, cysteine 955/cysteine 970, and cysteine 981/cysteine 1010. One can recognise a Peptidase S1 domain in the interval 802-1035 (ILGGRTSRPG…FVEWIKRQIY (234 aa)). Residues histidine 843 and aspartate 892 each act as charge relay system in the active site. The active-site Charge relay system is serine 985. N-linked (GlcNAc...) asparagine glycosylation occurs at asparagine 1022.

It belongs to the peptidase S1 family. Post-translationally, N-glycosylated; required for processing and activation. Activated through proteolytic processing by a trypsin-like protease; cleaved into a N-terminal propeptide and an activated corin protease fragment. Different soluble forms are produced by cleavage and autocatalytic cleavage: Atrial natriuretic peptide-converting enzyme, 180 kDa soluble fragment is produced by cleavage by ADAM10, while 160 kDa and 100 kDa soluble fragments are produced by autocatalytic cleavage. Cleavage by ADAM10 to produce soluble 180 kDa soluble fragment takes place after the transmembrane region and before FZ 1. In terms of processing, a disulfide bond links the activated corin protease fragment and the N-terminal propeptide. The disulfide bond also links the activated corin protease fragment with soluble fragments (100 kDa, 160 kDa and 180 kDa fragments). Highly expressed in heart. Expressed in heart myocytes. Also expressed in pregnant uterus. Detected in blood, in plasma as well as in serum (at protein level).

The protein localises to the cell membrane. It is found in the secreted. With respect to regulation, inhibited in a dose-dependent manner by non-specific trypsin-like serine protease inhibitors including benzamidine. In terms of biological role, serine-type endopeptidase involved in atrial natriuretic peptide (NPPA) and brain natriuretic peptide (NPPB) processing. Converts through proteolytic cleavage the non-functional propeptides NPPA and NPPB into their active hormones, ANP and BNP(1-32) respectively, thereby regulating blood pressure in the heart and promoting natriuresis, diuresis and vasodilation. Proteolytic cleavage of pro-NPPA also plays a role in female pregnancy by promoting trophoblast invasion and spiral artery remodeling in uterus. Also acts as a regulator of sodium reabsorption in kidney. Functionally, has weaker endopeptidase activity compared to isoform 1. The protein is Atrial natriuretic peptide-converting enzyme (CORIN) of Homo sapiens (Human).